The primary structure comprises 434 residues: Zinc finger protein kipf (434 aa).

Positions 7 to 88 constitute a ZAD domain; it reads NVCRTCMDET…EQSYQHFFRV (82 aa). The Zn(2+) site is built by C9, C12, C61, and C64. The disordered stretch occupies residues 117 to 173; it reads QLKSDRQQDTQQMTKTQKPDDDLSQKQTLQAKLQEGNIDGPPESFTLHPRKRTCRTE. A C2H2-type 1; degenerate zinc finger spans residues 197 to 219; the sequence is YNCPHCSKRFCSQTQLRTHITDL. 3 consecutive C2H2-type zinc fingers follow at residues 221 to 243, 249 to 271, and 277 to 299; these read NRCP…LRNH, HKCF…LRTH, and LSCS…RREH. Residues 295 to 328 form a disordered region; that stretch reads HRREHKQRPGSSKSESTKDPDSDDSDQAQDLKPK. A phosphoserine mark is found at S316 and S319. 3 consecutive C2H2-type zinc fingers follow at residues 348–370, 377–399, and 404–427; these read PICD…MLTH, KKCT…ERGH, and FRCE…KRIH.

As to quaternary structure, homodimer; mediated by the ZAD domain. Interacts (via C2H2 type zinc finger 4) with rhi/rhino (via Chromo domain). Dimerization is required for association with DNA and interaction with rhi/rhino. As to expression, primarily expressed in ovaries and absent from testes. In ovaries very low levels in germline stem cells and cystoblasts but abundant in developing cysts and polyploid nurse cells.

It is found in the nucleus. Its subcellular location is the chromosome. DNA-binding zinc finger protein that recruits chromo domain protein rhino/rhi to specific chromatin regions enriched in H3K9me2/3 histone methylation, mediating piRNA (piwi-interacting RNA) biogenesis. May bind to GC rich DNA sequences including a 5'-GRGGN-3' sequence motif. Nucleates rhi/rhino accumulation and stabilizes its expansion. Involved in piRNA transposon repression, particularly in the female ovary during oogenesis. This is Zinc finger protein kipf from Drosophila melanogaster (Fruit fly).